A 236-amino-acid polypeptide reads, in one-letter code: Uridylate kinase (236 aa).

ATP is bound at residue 11-14 (KFSG). A UMP-binding site is contributed by G53. ATP-binding residues include G54 and R58. UMP contacts are provided by residues D73 and 134 to 141 (TGSPFFTT). Residues T161, Y167, and D170 each coordinate ATP.

Belongs to the UMP kinase family. As to quaternary structure, homohexamer.

It is found in the cytoplasm. The enzyme catalyses UMP + ATP = UDP + ADP. It participates in pyrimidine metabolism; CTP biosynthesis via de novo pathway; UDP from UMP (UMPK route): step 1/1. Its activity is regulated as follows. Inhibited by UTP. In terms of biological role, catalyzes the reversible phosphorylation of UMP to UDP. The chain is Uridylate kinase from Hydrogenovibrio crunogenus (strain DSM 25203 / XCL-2) (Thiomicrospira crunogena).